Reading from the N-terminus, the 560-residue chain is Phosphoglucomutase 1 (560 aa).

Alpha-D-glucose 1,6-bisphosphate contacts are provided by R24 and S116. Residue S116 is the Phosphoserine intermediate of the active site. Mg(2+) is bound by residues S116, D288, D290, and D292. S116 is modified (phosphoserine). Alpha-D-glucose 1,6-bisphosphate contacts are provided by D292, R293, T357, E376, S378, and K389.

This sequence belongs to the phosphohexose mutase family. As to quaternary structure, monomer. The cofactor is Mg(2+). As to expression, localized primarily to fat bodies in third instar larvae.

The enzyme catalyses alpha-D-glucose 1-phosphate = alpha-D-glucose 6-phosphate. It carries out the reaction O-phospho-L-seryl-[protein] + alpha-D-glucose 1-phosphate = alpha-D-glucose 1,6-bisphosphate + L-seryl-[protein]. It catalyses the reaction alpha-D-glucose 1,6-bisphosphate + L-seryl-[protein] = O-phospho-L-seryl-[protein] + alpha-D-glucose 6-phosphate. Functionally, catalyzes the reversible isomerization of alpha-D-glucose 1-phosphate to alpha-D-glucose 6-phosphate. The mechanism proceeds via the intermediate compound alpha-D-glucose 1,6-bisphosphate. This enzyme participates in both the breakdown and synthesis of glucose. Enzyme of the glycolytic pathway. Glycolysis is essential in glial cells but not in neurons; neurons rely on the citric acid cycle for their energy needs, and on lactate and alanine secreted into the hemolymph by glial cells to fuel it. The chain is Phosphoglucomutase 1 from Drosophila melanogaster (Fruit fly).